Here is a 144-residue protein sequence, read N- to C-terminus: Transcription antitermination protein NusB (144 aa).

Belongs to the NusB family.

Involved in transcription antitermination. Required for transcription of ribosomal RNA (rRNA) genes. Binds specifically to the boxA antiterminator sequence of the ribosomal RNA (rrn) operons. This chain is Transcription antitermination protein NusB, found in Streptomyces avermitilis (strain ATCC 31267 / DSM 46492 / JCM 5070 / NBRC 14893 / NCIMB 12804 / NRRL 8165 / MA-4680).